The following is a 308-amino-acid chain: MGNTLGLAPMGTLPRRSPRREEPLPNPGSFDELHRLCKDVFPAQMEGVKLVVNKVLSSHFQVAHTIHMSALGLPGYHLHAAYAGDWQLSPTEVFPTVVGDMDSSGSLNAQVLLLLAERLRAKAVFQTQQAKFLTWQFDGEYRGDDYTATLTLGNPDLIGESVIMVAHFLQSLTHRLVLGGELVYHRRPGEEGAILTLAGKYSAVHWVATLNVGSGGAHASYYHRANEQVQVGVEFEANTRLQDTTFSFGYHLTLPQANMVFRGLVDSNWCVGAVLEKKMPPLPVTLALGAFLNHWRNRFHCGFSITVG.

Residues 1–29 are disordered; that stretch reads MGNTLGLAPMGTLPRRSPRREEPLPNPGS. Residues 281 to 308 are required for mitochondrial targeting; that stretch reads PLPVTLALGAFLNHWRNRFHCGFSITVG.

This sequence belongs to the Tom40 family. In terms of assembly, forms part of the preprotein translocase of the outer mitochondrial membrane (TOM complex) containing TOMM22, TOMM40, TOMM40L and TOMM70. Interacts with mitochondrial targeting sequences.

The protein resides in the mitochondrion outer membrane. In terms of biological role, potential channel-forming protein implicated in import of protein precursors into mitochondria. The protein is Mitochondrial import receptor subunit TOM40B (TOMM40L) of Homo sapiens (Human).